The sequence spans 747 residues: Protein tyrosine phosphatase domain-containing protein 1 (747 aa).

Residues 1 to 36 (MAAGVLPQNEDPYSTLVNSSGHAAHMDENSGRPAPK) form a disordered region. The segment covering 11–21 (DPYSTLVNSSG) has biased composition (polar residues). The 172-residue stretch at 82–253 (YSSWVTDNIL…LAPLRNIFSC (172 aa)) folds into the Tyrosine-protein phosphatase domain. The Phosphocysteine intermediate role is filled by Cys190. Phosphoserine occurs at positions 392, 394, and 543. Residues 549–570 (SSPKAQFPHGQETQDSTDLSEA) are disordered.

The protein belongs to the protein-tyrosine phosphatase family. Non-receptor class PTPDC1 subfamily.

Functionally, may play roles in cilia formation and/or maintenance. This is Protein tyrosine phosphatase domain-containing protein 1 (Ptpdc1) from Mus musculus (Mouse).